Reading from the N-terminus, the 219-residue chain is Protein OPG170 (219 aa).

Positions 1–16 (MYSLLFIILMCIPFSF) are cleaved as a signal peptide. A glycan (N-linked (GlcNAc...) asparagine; by host) is linked at asparagine 70.

It belongs to the orthopoxvirus OPG170 family.

It localises to the secreted. May interact with several cellular chemokines to interfere with chemokine-glycosaminoglycan (GAG) interactions at the cell surface to alter chemotaxis of nearby responsive cells. This Vaccinia virus (strain Copenhagen) (VACV) protein is Protein OPG170 (OPG170).